Here is a 344-residue protein sequence, read N- to C-terminus: Phenylalanine--tRNA ligase alpha subunit (344 aa).

Residue Glu256 coordinates Mg(2+).

The protein belongs to the class-II aminoacyl-tRNA synthetase family. Phe-tRNA synthetase alpha subunit type 1 subfamily. Tetramer of two alpha and two beta subunits. The cofactor is Mg(2+).

The protein localises to the cytoplasm. The enzyme catalyses tRNA(Phe) + L-phenylalanine + ATP = L-phenylalanyl-tRNA(Phe) + AMP + diphosphate + H(+). This Bacillus subtilis (strain 168) protein is Phenylalanine--tRNA ligase alpha subunit (pheS).